The chain runs to 445 residues: tRNA-2-methylthio-N(6)-dimethylallyladenosine synthase (445 aa).

Residues 3 to 124 (KKLYIKTYGC…LPELISKVVR (122 aa)) enclose the MTTase N-terminal domain. The [4Fe-4S] cluster site is built by cysteine 12, cysteine 48, cysteine 87, cysteine 162, cysteine 166, and cysteine 169. The region spanning 148-380 (YTQGASSFIS…QKELATQQLA (233 aa)) is the Radical SAM core domain. Positions 383–445 (ESCVGSTMKV…ALNSLTGEIL (63 aa)) constitute a TRAM domain.

The protein belongs to the methylthiotransferase family. MiaB subfamily. In terms of assembly, monomer. Requires [4Fe-4S] cluster as cofactor.

It localises to the cytoplasm. The enzyme catalyses N(6)-dimethylallyladenosine(37) in tRNA + (sulfur carrier)-SH + AH2 + 2 S-adenosyl-L-methionine = 2-methylsulfanyl-N(6)-dimethylallyladenosine(37) in tRNA + (sulfur carrier)-H + 5'-deoxyadenosine + L-methionine + A + S-adenosyl-L-homocysteine + 2 H(+). In terms of biological role, catalyzes the methylthiolation of N6-(dimethylallyl)adenosine (i(6)A), leading to the formation of 2-methylthio-N6-(dimethylallyl)adenosine (ms(2)i(6)A) at position 37 in tRNAs that read codons beginning with uridine. In Rickettsia typhi (strain ATCC VR-144 / Wilmington), this protein is tRNA-2-methylthio-N(6)-dimethylallyladenosine synthase.